The following is a 361-amino-acid chain: Phosphoserine aminotransferase (361 aa).

Residue R43 participates in L-glutamate binding. Pyridoxal 5'-phosphate-binding positions include A77–S78, W103, T152, D172, and Q195. The residue at position 196 (K196) is an N6-(pyridoxal phosphate)lysine. Pyridoxal 5'-phosphate is bound at residue N237–T238.

Belongs to the class-V pyridoxal-phosphate-dependent aminotransferase family. SerC subfamily. As to quaternary structure, homodimer. Requires pyridoxal 5'-phosphate as cofactor.

It is found in the cytoplasm. The enzyme catalyses O-phospho-L-serine + 2-oxoglutarate = 3-phosphooxypyruvate + L-glutamate. It carries out the reaction 4-(phosphooxy)-L-threonine + 2-oxoglutarate = (R)-3-hydroxy-2-oxo-4-phosphooxybutanoate + L-glutamate. The protein operates within amino-acid biosynthesis; L-serine biosynthesis; L-serine from 3-phospho-D-glycerate: step 2/3. It participates in cofactor biosynthesis; pyridoxine 5'-phosphate biosynthesis; pyridoxine 5'-phosphate from D-erythrose 4-phosphate: step 3/5. Functionally, catalyzes the reversible conversion of 3-phosphohydroxypyruvate to phosphoserine and of 3-hydroxy-2-oxo-4-phosphonooxybutanoate to phosphohydroxythreonine. This Desulfatibacillum aliphaticivorans protein is Phosphoserine aminotransferase.